A 476-amino-acid chain; its full sequence is Zinc transporter SLC39A7 (476 aa).

A helical membrane pass occupies residues A7–G27. Basic and acidic residues predominate over residues H35–H109. The interval H35 to P131 is disordered. At H73 the chain carries Pros-methylhistidine. A compositionally biased stretch (basic residues) spans H110–H120. 3 helical membrane passes run A146–V166, L177–I197, and G222–E242. Residues K249 to S320 are disordered. The segment covering G257–G292 has biased composition (basic and acidic residues). S283 is modified (phosphoserine). A run of 2 helical transmembrane segments spans residues V393–V413 and V417–V437.

Belongs to the ZIP transporter (TC 2.A.5) family. KE4/Catsup subfamily. Homodimer. Methylation at some His residue by METTL9 leads to reduced zinc-binding. Post-translationally, rapidly phosphorylated by CK2 following Zn(2+) treatment. This phosphorylation is required for efficient cytosolic Zn(2+) release. In terms of tissue distribution, widely expressed. Highly expressed in the intestinal crypts.

The protein localises to the endoplasmic reticulum membrane. The protein resides in the golgi apparatus. It is found in the cis-Golgi network membrane. The enzyme catalyses Zn(2+)(in) = Zn(2+)(out). Its function is as follows. Transports Zn(2+) from the endoplasmic reticulum (ER)/Golgi apparatus to the cytosol, playing an essential role in the regulation of cytosolic zinc levels. Acts as a gatekeeper of zinc release from intracellular stores, requiring post-translational activation by phosphorylation, resulting in activation of multiple downstream pathways leading to cell growth and proliferation. Has an essential role in B cell development and is required for proper B cell receptor signaling. Plays an important role in maintaining intestinal epithelial homeostasis and skin dermis development by regulating ER function. Controls cell signaling pathways involved in glucose metabolism in skeletal muscle. Has a protective role against ER stress in different biological contexts. Mediates Zn(2+)-induced ferroptosis. The protein is Zinc transporter SLC39A7 (Slc39a7) of Mus musculus (Mouse).